Here is a 198-residue protein sequence, read N- to C-terminus: Protein GrpE (198 aa).

The disordered stretch occupies residues 1–56; the sequence is MVEKKKSQAEKNNQSATEEEIEKAVKGSKRDSNAADEKNSASAAASSSAVSDAEPA. Residues 22–39 are compositionally biased toward basic and acidic residues; it reads EKAVKGSKRDSNAADEKN. Low complexity predominate over residues 40–56; it reads SASAAASSSAVSDAEPA.

Belongs to the GrpE family. Homodimer.

Its subcellular location is the cytoplasm. Participates actively in the response to hyperosmotic and heat shock by preventing the aggregation of stress-denatured proteins, in association with DnaK and GrpE. It is the nucleotide exchange factor for DnaK and may function as a thermosensor. Unfolded proteins bind initially to DnaJ; upon interaction with the DnaJ-bound protein, DnaK hydrolyzes its bound ATP, resulting in the formation of a stable complex. GrpE releases ADP from DnaK; ATP binding to DnaK triggers the release of the substrate protein, thus completing the reaction cycle. Several rounds of ATP-dependent interactions between DnaJ, DnaK and GrpE are required for fully efficient folding. In Oenococcus oeni (strain ATCC BAA-331 / PSU-1), this protein is Protein GrpE.